Consider the following 99-residue polypeptide: NADH dehydrogenase [ubiquinone] 1 alpha subcomplex subunit 2 (99 aa).

A2 is modified (N-acetylalanine). C24 and C58 form a disulfide bridge. K64 is modified (N6-acetyllysine; alternate). The residue at position 64 (K64) is an N6-succinyllysine; alternate. K75 bears the N6-acetyllysine mark.

It belongs to the complex I NDUFA2 subunit family. Complex I is composed of 45 different subunits.

It is found in the mitochondrion inner membrane. In terms of biological role, accessory subunit of the mitochondrial membrane respiratory chain NADH dehydrogenase (Complex I), that is believed not to be involved in catalysis. Complex I functions in the transfer of electrons from NADH to the respiratory chain. The immediate electron acceptor for the enzyme is believed to be ubiquinone. The polypeptide is NADH dehydrogenase [ubiquinone] 1 alpha subcomplex subunit 2 (NDUFA2) (Bos taurus (Bovine)).